Reading from the N-terminus, the 156-residue chain is Small ribosomal subunit protein uS7 (156 aa).

Belongs to the universal ribosomal protein uS7 family. As to quaternary structure, part of the 30S ribosomal subunit. Contacts proteins S9 and S11.

Its function is as follows. One of the primary rRNA binding proteins, it binds directly to 16S rRNA where it nucleates assembly of the head domain of the 30S subunit. Is located at the subunit interface close to the decoding center, probably blocks exit of the E-site tRNA. The polypeptide is Small ribosomal subunit protein uS7 (Ruegeria pomeroyi (strain ATCC 700808 / DSM 15171 / DSS-3) (Silicibacter pomeroyi)).